The sequence spans 400 residues: uncharacterized protein (400 aa).

Residues asparagine 161–leucine 380 form the TR mART core domain.

This is an uncharacterized protein from Acanthamoeba polyphaga (Amoeba).